We begin with the raw amino-acid sequence, 348 residues long: Sulfate/thiosulfate import ATP-binding protein CysA (348 aa).

An ABC transporter domain is found at 3–237 (IEVRNIVKEF…PASAFVHGFI (235 aa)). 35–42 (GPSGSGKT) contributes to the ATP binding site.

It belongs to the ABC transporter superfamily. Sulfate/tungstate importer (TC 3.A.1.6) family. The complex is composed of two ATP-binding proteins (CysA), two transmembrane proteins (CysT and CysW) and a solute-binding protein (CysP).

It localises to the cell inner membrane. It catalyses the reaction sulfate(out) + ATP + H2O = sulfate(in) + ADP + phosphate + H(+). The enzyme catalyses thiosulfate(out) + ATP + H2O = thiosulfate(in) + ADP + phosphate + H(+). Its function is as follows. Part of the ABC transporter complex CysAWTP involved in sulfate/thiosulfate import. Responsible for energy coupling to the transport system. The polypeptide is Sulfate/thiosulfate import ATP-binding protein CysA (Rhodopseudomonas palustris (strain ATCC BAA-98 / CGA009)).